An 81-amino-acid chain; its full sequence is Putative CNGA1-overlapping antisense gene protein (81 aa).

Expressed in brain, notably in regions involved in long-term potentiation and long-term depression, such as hippocampal CA1 and CA3, dentate gyrus and cerebellar Purkinje layer.

This is Putative CNGA1-overlapping antisense gene protein from Homo sapiens (Human).